The sequence spans 317 residues: Transaldolase (317 aa).

Lys-126 functions as the Schiff-base intermediate with substrate in the catalytic mechanism.

It belongs to the transaldolase family. Type 1 subfamily. Homodimer.

It is found in the cytoplasm. The enzyme catalyses D-sedoheptulose 7-phosphate + D-glyceraldehyde 3-phosphate = D-erythrose 4-phosphate + beta-D-fructose 6-phosphate. It participates in carbohydrate degradation; pentose phosphate pathway; D-glyceraldehyde 3-phosphate and beta-D-fructose 6-phosphate from D-ribose 5-phosphate and D-xylulose 5-phosphate (non-oxidative stage): step 2/3. Transaldolase is important for the balance of metabolites in the pentose-phosphate pathway. In Burkholderia ambifaria (strain ATCC BAA-244 / DSM 16087 / CCUG 44356 / LMG 19182 / AMMD) (Burkholderia cepacia (strain AMMD)), this protein is Transaldolase.